We begin with the raw amino-acid sequence, 100 residues long: U12-ctenitoxin-Pn1a (100 aa).

The signal sequence occupies residues Met-1–Ala-28. A propeptide spanning residues Lys-29 to Glu-41 is cleaved from the precursor. 5 disulfide bridges follow: Cys-44–Cys-58, Cys-51–Cys-64, Cys-57–Cys-82, Cys-66–Cys-80, and Cys-90–Cys-97.

Belongs to the neurotoxin 09 (Tx3-6) family. As to expression, expressed by the venom gland.

It is found in the secreted. Functionally, probable neurotoxin. The protein is U12-ctenitoxin-Pn1a of Phoneutria nigriventer (Brazilian armed spider).